The following is a 197-amino-acid chain: Surfactant protein C (197 aa).

Positions 1–23 (MDVGSKEVLMESPPDYSAAPRGR) are excised as a propeptide. 2 S-palmitoyl cysteine lipidation sites follow: Cys28 and Cys29. A propeptide spanning residues 59–197 (HMSQKHTEMV…LCGEVPLYYI (139 aa)) is cleaved from the precursor. The region spanning 94–197 (FSIGSTGLVV…LCGEVPLYYI (104 aa)) is the BRICHOS domain. Intrachain disulfides connect Cys120–Cys148 and Cys121–Cys189.

It is found in the secreted. The protein localises to the extracellular space. It localises to the surface film. Functionally, pulmonary surfactant associated proteins promote alveolar stability by lowering the surface tension at the air-liquid interface in the peripheral air spaces. The chain is Surfactant protein C from Homo sapiens (Human).